The sequence spans 396 residues: DNA repair protein RAD14 (396 aa).

The span at 20-29 (NRKRALERLQ) shows a compositional bias: basic and acidic residues. 2 disordered regions span residues 20–101 (NRKR…EQRQ) and 116–156 (NLKQ…KFQP). The segment covering 41–62 (PSSTPKSTSTTTTKETGSYSPT) has biased composition (low complexity). Residues 63–78 (KTLSQIVNSDSVQVSS) show a composition bias toward polar residues. Positions 118-127 (KQRENQKDDS) are enriched in basic and acidic residues. Positions 128-153 (TTSSKPVDNIRLNQNRPDSVVSSTKK) are enriched in polar residues. C223, C226, C244, and C247 together coordinate Zn(2+). A zinc finger lies at 223 to 247 (CRECQSMEVDANLMTNFNVRACRKC).

This sequence belongs to the XPA family.

Its subcellular location is the nucleus. Functionally, involved in DNA excision repair. This is DNA repair protein RAD14 (RAD14) from Candida albicans (strain SC5314 / ATCC MYA-2876) (Yeast).